The chain runs to 1403 residues: E3 ubiquitin-protein ligase SNT2 (1403 aa).

Residues 40–62 are disordered; the sequence is SGAKTKGSNSQTPRNCKRTSNPA. The span at 45 to 62 shows a compositional bias: polar residues; that stretch reads KGSNSQTPRNCKRTSNPA. One can recognise a BAH domain in the interval 121 to 258; it reads VLLSANDTIY…RYTLKYYKVY (138 aa). The PHD-type 1 zinc finger occupies 317–369; the sequence is DKRCQFCKEWCIQKESLSCDECGVCAHLYCMDPPLDRKPNKDVVWTCFSCLQK. In terms of domain architecture, SANT spans 555-606; sequence LKEPSFTAVEIRKFEEAVEKFGSELRPVCEYVGTQPMSMIVRFYYNWKKTER. The PHD-type 2 zinc finger occupies 1038-1097; that stretch reads RTFCSVCKEKFNDNDNYEVVCGNCGLTVHYFCYAIKLPKDMKKNTNLKTFKWLCDPCSND. The RING-type; degenerate zinc finger occupies 1041–1095; it reads CSVCKEKFNDNDNYEVVCGNCGLTVHYFCYAIKLPKDMKKNTNLKTFKWLCDPCS. Residues 1105–1153 form a C2HC pre-PHD-type zinc finger; it reads TYQCSMCPTKDYDYDRYRSQSFKICPDALKCTSLGTWVHLVCSLFNEDI. The PHD-type 3; degenerate zinc-finger motif lies at 1177-1231; the sequence is FTCGVCRINGGGLVKCNKCQYRYHITCAQNSSNFKLMFEKKNMSVDTTLPCIKDV.

In terms of assembly, component of the Snt2C complex composed of SNT2, ECM5 and RPD3. Interacts with the E2 ubiquitin-conjugating enzyme UBC4 and histones H3 and H4. Binding is enhanced to methylated histone H3K36me3.

The protein resides in the cytoplasm. It localises to the nucleus. The enzyme catalyses S-ubiquitinyl-[E2 ubiquitin-conjugating enzyme]-L-cysteine + [acceptor protein]-L-lysine = [E2 ubiquitin-conjugating enzyme]-L-cysteine + N(6)-ubiquitinyl-[acceptor protein]-L-lysine.. In terms of biological role, transcriptional regulator that, together with ECM5, recruits histone deacetylase RPD3 to a small number of promoters of stress-response genes in response to oxidative stress. Probable ubiquitin-protein ligase involved in the degradation-related ubiquitination of histones. Contributes to the post-translational regulation of histone protein levels by polyubiquitination of excess histones for subsequent degradation. This is E3 ubiquitin-protein ligase SNT2 from Saccharomyces cerevisiae (strain ATCC 204508 / S288c) (Baker's yeast).